The primary structure comprises 229 residues: Large ribosomal subunit protein uL1 (229 aa).

The protein belongs to the universal ribosomal protein uL1 family. As to quaternary structure, part of the 50S ribosomal subunit.

In terms of biological role, binds directly to 23S rRNA. The L1 stalk is quite mobile in the ribosome, and is involved in E site tRNA release. Protein L1 is also a translational repressor protein, it controls the translation of the L11 operon by binding to its mRNA. The sequence is that of Large ribosomal subunit protein uL1 from Enterococcus faecalis (strain ATCC 700802 / V583).